The following is a 209-amino-acid chain: Uracil phosphoribosyltransferase (209 aa).

5-phospho-alpha-D-ribose 1-diphosphate-binding positions include Arg-79, Arg-104, and 131–139 (DPMLATGAS). Residues Ile-194 and 199 to 201 (GDA) each bind uracil. Asp-200 provides a ligand contact to 5-phospho-alpha-D-ribose 1-diphosphate.

Belongs to the UPRTase family. Mg(2+) serves as cofactor.

The enzyme catalyses UMP + diphosphate = 5-phospho-alpha-D-ribose 1-diphosphate + uracil. It functions in the pathway pyrimidine metabolism; UMP biosynthesis via salvage pathway; UMP from uracil: step 1/1. With respect to regulation, allosterically activated by GTP. Catalyzes the conversion of uracil and 5-phospho-alpha-D-ribose 1-diphosphate (PRPP) to UMP and diphosphate. This is Uracil phosphoribosyltransferase from Staphylococcus epidermidis (strain ATCC 35984 / DSM 28319 / BCRC 17069 / CCUG 31568 / BM 3577 / RP62A).